We begin with the raw amino-acid sequence, 238 residues long: ATP synthase subunit a (238 aa).

The next 5 membrane-spanning stretches (helical) occupy residues 18–38 (LTLLAVCIVTIAVIFAFVFWA), 76–96 (YSLLLFTIFLFVAVANNLGLF), 114–134 (NLAFDLALSLFITLMVHIEGV), 166–186 (SLAIRLFGNIFAGEVVTGLIV), and 193–213 (VYWWPIAFLVNMAWTAFSVFI).

This sequence belongs to the ATPase A chain family. As to quaternary structure, F-type ATPases have 2 components, CF(1) - the catalytic core - and CF(0) - the membrane proton channel. CF(1) has five subunits: alpha(3), beta(3), gamma(1), delta(1), epsilon(1). CF(0) has three main subunits: a(1), b(2) and c(9-12). The alpha and beta chains form an alternating ring which encloses part of the gamma chain. CF(1) is attached to CF(0) by a central stalk formed by the gamma and epsilon chains, while a peripheral stalk is formed by the delta and b chains.

It is found in the cell membrane. Key component of the proton channel; it plays a direct role in the translocation of protons across the membrane. The chain is ATP synthase subunit a from Streptococcus pyogenes serotype M49 (strain NZ131).